The sequence spans 222 residues: Cytidylate kinase (222 aa).

Residue 10–18 (GPAGAGKST) coordinates ATP.

It belongs to the cytidylate kinase family. Type 1 subfamily.

It is found in the cytoplasm. It carries out the reaction CMP + ATP = CDP + ADP. It catalyses the reaction dCMP + ATP = dCDP + ADP. The chain is Cytidylate kinase from Halalkalibacterium halodurans (strain ATCC BAA-125 / DSM 18197 / FERM 7344 / JCM 9153 / C-125) (Bacillus halodurans).